Consider the following 91-residue polypeptide: Small ribosomal subunit protein bS20 (91 aa).

The interval 1-28 (MPNIKSAIKRTKTIEKRRAHRASQKSDL) is disordered. Residues 7-23 (AIKRTKTIEKRRAHRAS) are compositionally biased toward basic residues.

Belongs to the bacterial ribosomal protein bS20 family.

Functionally, binds directly to 16S ribosomal RNA. This chain is Small ribosomal subunit protein bS20, found in Brevibacillus brevis (strain 47 / JCM 6285 / NBRC 100599).